Here is a 462-residue protein sequence, read N- to C-terminus: ATP synthase subunit beta (462 aa).

151–158 (GGAGVGKT) contacts ATP.

It belongs to the ATPase alpha/beta chains family. As to quaternary structure, F-type ATPases have 2 components, CF(1) - the catalytic core - and CF(0) - the membrane proton channel. CF(1) has five subunits: alpha(3), beta(3), gamma(1), delta(1), epsilon(1). CF(0) has four main subunits: a(1), b(1), b'(1) and c(9-12).

Its subcellular location is the cell inner membrane. The enzyme catalyses ATP + H2O + 4 H(+)(in) = ADP + phosphate + 5 H(+)(out). Functionally, produces ATP from ADP in the presence of a proton gradient across the membrane. The catalytic sites are hosted primarily by the beta subunits. In Chlorobium phaeobacteroides (strain DSM 266 / SMG 266 / 2430), this protein is ATP synthase subunit beta.